Consider the following 212-residue polypeptide: Ribosomal RNA large subunit methyltransferase E (212 aa).

The S-adenosyl-L-methionine site is built by Gly57, Trp59, Asp77, Asp93, and Asp122. Catalysis depends on Lys162, which acts as the Proton acceptor.

The protein belongs to the class I-like SAM-binding methyltransferase superfamily. RNA methyltransferase RlmE family.

The protein localises to the cytoplasm. It catalyses the reaction uridine(2552) in 23S rRNA + S-adenosyl-L-methionine = 2'-O-methyluridine(2552) in 23S rRNA + S-adenosyl-L-homocysteine + H(+). Specifically methylates the uridine in position 2552 of 23S rRNA at the 2'-O position of the ribose in the fully assembled 50S ribosomal subunit. This Coxiella burnetii (strain CbuK_Q154) (Coxiella burnetii (strain Q154)) protein is Ribosomal RNA large subunit methyltransferase E.